The chain runs to 128 residues: Glycine cleavage system H protein (128 aa).

In terms of domain architecture, Lipoyl-binding spans 23–105 (VATVGISDHA…YEGGWLFKVQ (83 aa)). Lysine 64 is subject to N6-lipoyllysine.

Belongs to the GcvH family. As to quaternary structure, the glycine cleavage system is composed of four proteins: P, T, L and H. It depends on (R)-lipoate as a cofactor.

In terms of biological role, the glycine cleavage system catalyzes the degradation of glycine. The H protein shuttles the methylamine group of glycine from the P protein to the T protein. In Alcanivorax borkumensis (strain ATCC 700651 / DSM 11573 / NCIMB 13689 / SK2), this protein is Glycine cleavage system H protein.